Reading from the N-terminus, the 293-residue chain is Acetyl-coenzyme A carboxylase carboxyl transferase subunit beta (293 aa).

The CoA carboxyltransferase N-terminal domain maps to 29 to 293 (LWSKCPECGQ…GCKPMELTSA (265 aa)). Residues cysteine 33, cysteine 36, cysteine 52, and cysteine 55 each coordinate Zn(2+). The C4-type zinc finger occupies 33-55 (CPECGQVVYLKDLKLNASVCANC).

It belongs to the AccD/PCCB family. Acetyl-CoA carboxylase is a heterohexamer composed of biotin carboxyl carrier protein (AccB), biotin carboxylase (AccC) and two subunits each of ACCase subunit alpha (AccA) and ACCase subunit beta (AccD). The cofactor is Zn(2+).

Its subcellular location is the cytoplasm. It catalyses the reaction N(6)-carboxybiotinyl-L-lysyl-[protein] + acetyl-CoA = N(6)-biotinyl-L-lysyl-[protein] + malonyl-CoA. Its pathway is lipid metabolism; malonyl-CoA biosynthesis; malonyl-CoA from acetyl-CoA: step 1/1. Its function is as follows. Component of the acetyl coenzyme A carboxylase (ACC) complex. Biotin carboxylase (BC) catalyzes the carboxylation of biotin on its carrier protein (BCCP) and then the CO(2) group is transferred by the transcarboxylase to acetyl-CoA to form malonyl-CoA. This is Acetyl-coenzyme A carboxylase carboxyl transferase subunit beta from Synechococcus sp. (strain CC9605).